We begin with the raw amino-acid sequence, 91 residues long: Small ribosomal subunit protein uS19 (91 aa).

It belongs to the universal ribosomal protein uS19 family.

Protein S19 forms a complex with S13 that binds strongly to the 16S ribosomal RNA. The protein is Small ribosomal subunit protein uS19 of Marinobacter nauticus (strain ATCC 700491 / DSM 11845 / VT8) (Marinobacter aquaeolei).